The following is a 246-amino-acid chain: uncharacterized protein (246 aa).

6 consecutive transmembrane segments (helical) span residues 7–27 (KVTLVSLILMAVFQFFMALII), 50–70 (LNILLQALTIVIAATIVSMEF), 99–119 (VSFYLYLAYYILALLFGLLFF), 135–155 (LALIGSNWLEAVMMGLFGLLC), 163–183 (AVAVVVSFVVLYGASTLVQLM), and 219–239 (FSIGILIIHAIFFIVVGWWCF).

It is found in the cell membrane. This is an uncharacterized protein from Bacillus subtilis (strain 168).